A 288-amino-acid polypeptide reads, in one-letter code: Release factor glutamine methyltransferase (288 aa).

S-adenosyl-L-methionine is bound by residues D142 and N186. Position 186–189 (186–189 (NPPY)) interacts with substrate.

This sequence belongs to the protein N5-glutamine methyltransferase family. PrmC subfamily.

The catalysed reaction is L-glutaminyl-[peptide chain release factor] + S-adenosyl-L-methionine = N(5)-methyl-L-glutaminyl-[peptide chain release factor] + S-adenosyl-L-homocysteine + H(+). In terms of biological role, methylates the class 1 translation termination release factors RF1/PrfA and RF2/PrfB on the glutamine residue of the universally conserved GGQ motif. The protein is Release factor glutamine methyltransferase of Mycobacterium leprae (strain TN).